A 548-amino-acid polypeptide reads, in one-letter code: Probable malate:quinone oxidoreductase (548 aa).

The protein belongs to the MQO family. It depends on FAD as a cofactor.

It carries out the reaction (S)-malate + a quinone = a quinol + oxaloacetate. It functions in the pathway carbohydrate metabolism; tricarboxylic acid cycle; oxaloacetate from (S)-malate (quinone route): step 1/1. This Escherichia coli O6:K15:H31 (strain 536 / UPEC) protein is Probable malate:quinone oxidoreductase.